Consider the following 347-residue polypeptide: MATNGLMASSSVFLHRPRIAFASRTNQTVGKYGKGRVSFMGIGTRRLPVVLSMTAMADSGEEAVKSVLPGNGISIMVNGCSGKMGKAVIKAADSAGVNIVPISFGSAGEDGQRVEVCGKEITVHGPTEREKVLSSVFEKHPELIVVDYTIPSAVNDNAELYSKVGVPFVMGTTGGDRNKLYETVEEAKIYAVISPQMGKQVVAFLAAMEIMAEQFPGAFSGYSLDVMESHQASKLDASGTAKAVISCFQELGVSYDMDQIQLIRDPKQQVEMVGVPEEHISGHAFHLYHLTSPDETVSFEFQHNVCGRSIYAEGTVDAVLFLAKKIRLKADQRIYNMIDVLREGNMR.

A chloroplast-targeting transit peptide spans 1–51 (MATNGLMASSSVFLHRPRIAFASRTNQTVGKYGKGRVSFMGIGTRRLPVVL). Ser52 carries the post-translational modification N-acetylserine. NAD(+) is bound by residues 79-84 (GCSGKM), 171-173 (GTT), and 194-197 (SPQM). The Proton donor/acceptor role is filled by His230. Lys234 functions as the Proton donor in the catalytic mechanism. (S)-2,3,4,5-tetrahydrodipicolinate is bound at residue 239 to 240 (GT).

This sequence belongs to the DapB family.

It is found in the plastid. The protein localises to the chloroplast. It catalyses the reaction (S)-2,3,4,5-tetrahydrodipicolinate + NAD(+) + H2O = (2S,4S)-4-hydroxy-2,3,4,5-tetrahydrodipicolinate + NADH + H(+). The catalysed reaction is (S)-2,3,4,5-tetrahydrodipicolinate + NADP(+) + H2O = (2S,4S)-4-hydroxy-2,3,4,5-tetrahydrodipicolinate + NADPH + H(+). Its pathway is amino-acid biosynthesis; L-lysine biosynthesis via DAP pathway; (S)-tetrahydrodipicolinate from L-aspartate: step 4/4. In terms of biological role, catalyzes the conversion of 4-hydroxy-tetrahydrodipicolinate (HTPA) to tetrahydrodipicolinate. The polypeptide is 4-hydroxy-tetrahydrodipicolinate reductase 1, chloroplastic (DAPB1) (Arabidopsis thaliana (Mouse-ear cress)).